The sequence spans 267 residues: Type II pantothenate kinase (267 aa).

6–13 (DAGGTLIK) serves as a coordination point for ATP. The active-site Proton acceptor is glutamate 70. ATP-binding positions include threonine 99, 121–125 (GGMIQ), tyrosine 137, and serine 225.

The protein belongs to the type II pantothenate kinase family. In terms of assembly, homodimer.

The protein localises to the cytoplasm. The catalysed reaction is (R)-pantothenate + ATP = (R)-4'-phosphopantothenate + ADP + H(+). Its pathway is cofactor biosynthesis; coenzyme A biosynthesis; CoA from (R)-pantothenate: step 1/5. In terms of biological role, catalyzes the phosphorylation of pantothenate (Pan), the first step in CoA biosynthesis. In Staphylococcus aureus (strain bovine RF122 / ET3-1), this protein is Type II pantothenate kinase.